Here is a 518-residue protein sequence, read N- to C-terminus: ESX-3 secretion system ATPase EccB3 (518 aa).

Positions 1–26 are disordered; sequence MTGPVNPDDRRSFSSRTPVNENPDGV. The chain crosses the membrane as a helical span at residues 71 to 91; that stretch reads VLTGALILVTGLVGCFIFSLF.

It belongs to the EccB family. As to quaternary structure, part of the ESX-3 / type VII secretion system (T7SS), which is composed of cytosolic and membrane components. The ESX-3 membrane complex is composed of EccB3, EccC3, EccD3 and EccE3.

The protein localises to the cell inner membrane. Its function is as follows. An ATPase. Part of the ESX-3 specialized secretion system, which is required for siderophore-mediated iron acquisition and for the secretion of EsxH and EsxG. This chain is ESX-3 secretion system ATPase EccB3, found in Mycolicibacterium smegmatis (strain ATCC 700084 / mc(2)155) (Mycobacterium smegmatis).